The sequence spans 120 residues: Large ribosomal subunit protein bL12 (120 aa).

It belongs to the bacterial ribosomal protein bL12 family. Homodimer. Part of the ribosomal stalk of the 50S ribosomal subunit. Forms a multimeric L10(L12)X complex, where L10 forms an elongated spine to which 2 to 4 L12 dimers bind in a sequential fashion. Binds GTP-bound translation factors.

Its function is as follows. Forms part of the ribosomal stalk which helps the ribosome interact with GTP-bound translation factors. Is thus essential for accurate translation. In Lactobacillus gasseri (strain ATCC 33323 / DSM 20243 / BCRC 14619 / CIP 102991 / JCM 1131 / KCTC 3163 / NCIMB 11718 / NCTC 13722 / AM63), this protein is Large ribosomal subunit protein bL12.